A 453-amino-acid chain; its full sequence is tRNA-2-methylthio-N(6)-dimethylallyladenosine synthase (453 aa).

Residues 7-123 (GTYWITTFGC…LDTLLSQVEA (117 aa)) form the MTTase N-terminal domain. Positions 16, 52, 86, 158, 162, and 165 each coordinate [4Fe-4S] cluster. The 238-residue stretch at 144 to 381 (RDSSLCAWVN…NALVERKAKA (238 aa)) folds into the Radical SAM core domain. The 64-residue stretch at 384–447 (QRYLGRVEEV…AFSLSGSAQA (64 aa)) folds into the TRAM domain.

This sequence belongs to the methylthiotransferase family. MiaB subfamily. As to quaternary structure, monomer. The cofactor is [4Fe-4S] cluster.

The protein localises to the cytoplasm. The catalysed reaction is N(6)-dimethylallyladenosine(37) in tRNA + (sulfur carrier)-SH + AH2 + 2 S-adenosyl-L-methionine = 2-methylsulfanyl-N(6)-dimethylallyladenosine(37) in tRNA + (sulfur carrier)-H + 5'-deoxyadenosine + L-methionine + A + S-adenosyl-L-homocysteine + 2 H(+). Its function is as follows. Catalyzes the methylthiolation of N6-(dimethylallyl)adenosine (i(6)A), leading to the formation of 2-methylthio-N6-(dimethylallyl)adenosine (ms(2)i(6)A) at position 37 in tRNAs that read codons beginning with uridine. The sequence is that of tRNA-2-methylthio-N(6)-dimethylallyladenosine synthase from Synechococcus sp. (strain RCC307).